We begin with the raw amino-acid sequence, 339 residues long: GATA transcription factor 5 (339 aa).

Disordered stretches follow at residues 68-88 (MVRV…RSSD), 126-145 (EYSG…WLTG), 163-206 (PVPA…PSSP), and 221-242 (ERPP…SGEL). Polar residues predominate over residues 126 to 136 (EYSGPNLTGTP). The Nuclear localization signal motif lies at 167–174 (KARSKRNR). Residues 181–206 (SLGSSSSSGPSSSGSTSSSSSGPSSP) show a composition bias toward low complexity. A GATA-type zinc finger spans residues 245 to 299 (LQPQRKCSHCGVQKTPQWRAGPMGAKTLCNACGVRYKSGRLLPEYRPACSPTFSS). The interval 314–339 (RKKEPTSDNETGLNQLVQSPQAVPSF) is disordered. The span at 321–339 (DNETGLNQLVQSPQAVPSF) shows a compositional bias: polar residues.

This sequence belongs to the type IV zinc-finger family. Class A subfamily.

Its subcellular location is the nucleus. Functionally, transcriptional activator that specifically binds 5'-GATA-3' or 5'-GAT-3' motifs within gene promoters. May be involved in the regulation of some light-responsive genes. The sequence is that of GATA transcription factor 5 (GATA5) from Arabidopsis thaliana (Mouse-ear cress).